A 138-amino-acid chain; its full sequence is Basic phospholipase A2 homolog Ts-K49a (138 aa).

The N-terminal stretch at 1–16 is a signal peptide; the sequence is MRTLWIMAVLLLGVEG. 7 disulfide bridges follow: C42–C131, C44–C60, C59–C111, C65–C138, C66–C104, C73–C97, and C91–C102. The important for membrane-damaging activities in eukaryotes and bacteria; heparin-binding stretch occupies residues 121 to 133; sequence KKKKINLKLFCKK.

As to expression, expressed by the venom gland.

It localises to the secreted. Snake venom phospholipase A2 homolog that lacks catalytic activity. It shows myotoxic and weak anticoagulant activities and induces local edema a few hours after injection (5-10 ug) in the hind paw. A model of myotoxic mechanism has been proposed: an apo Lys49-PLA2 is activated by the entrance of a hydrophobic molecule (e.g. fatty acid) at the hydrophobic channel of the protein leading to a reorientation of a monomer. This reorientation causes a transition between 'inactive' to 'active' states, causing alignment of C-terminal and membrane-docking sites (MDoS) side-by-side and putting the membrane-disruption sites (MDiS) in the same plane, exposed to solvent and in a symmetric position for both monomers. The MDoS region stabilizes the toxin on membrane by the interaction of charged residues with phospholipid head groups. Subsequently, the MDiS region destabilizes the membrane with penetration of hydrophobic residues. This insertion causes a disorganization of the membrane, allowing an uncontrolled influx of ions (i.e. calcium and sodium), and eventually triggering irreversible intracellular alterations and cell death. This chain is Basic phospholipase A2 homolog Ts-K49a, found in Trimeresurus stejnegeri (Chinese green tree viper).